Consider the following 188-residue polypeptide: SLRKTVQDLLVQLQEAERQHQSERVDFEATLSRYQREAEQSHVALQRAEDRVEQKEAEVEELQKRLLGMETEHQALLAKVREGVTALEELRGKNSDCRAEQEKAANLEKEVAGLREKIHHLDDMLKSQQRKVRQMIEQLQNSKTVIQSKDTAIQELKEKIAYLEAENLEMHDRMEHLIEKQISHGNFS.

A coiled-coil region spans residues 1–181; the sequence is SLRKTVQDLL…DRMEHLIEKQ (181 aa).

This sequence belongs to the tuftelin family. As to quaternary structure, interacts with TFIP11.

The protein localises to the secreted. Functionally, involved in the structural organization of the epidermis. Involved in the mineralization and structural organization of enamel. This Sus scrofa (Pig) protein is Tuftelin (TUFT1).